The primary structure comprises 414 residues: Signal recognition particle receptor FtsY (414 aa).

GTP contacts are provided by residues 216 to 223 (GVNGVGKT), 298 to 302 (DTAGR), and 362 to 365 (TKLD).

This sequence belongs to the GTP-binding SRP family. FtsY subfamily. As to quaternary structure, part of the signal recognition particle protein translocation system, which is composed of SRP and FtsY. SRP is a ribonucleoprotein composed of Ffh and a 4.5S RNA molecule.

Its subcellular location is the cell inner membrane. The protein localises to the cytoplasm. It carries out the reaction GTP + H2O = GDP + phosphate + H(+). Its function is as follows. Involved in targeting and insertion of nascent membrane proteins into the cytoplasmic membrane. Acts as a receptor for the complex formed by the signal recognition particle (SRP) and the ribosome-nascent chain (RNC). Interaction with SRP-RNC leads to the transfer of the RNC complex to the Sec translocase for insertion into the membrane, the hydrolysis of GTP by both Ffh and FtsY, and the dissociation of the SRP-FtsY complex into the individual components. The protein is Signal recognition particle receptor FtsY of Haemophilus influenzae (strain ATCC 51907 / DSM 11121 / KW20 / Rd).